The chain runs to 778 residues: Endonuclease MutS2 (778 aa).

328–335 serves as a coordination point for ATP; that stretch reads GPNTGGKT. Positions 702–777 constitute a Smr domain; that stretch reads LDLRGKRYEE…GSGATIVTFK (76 aa).

Belongs to the DNA mismatch repair MutS family. MutS2 subfamily. In terms of assembly, homodimer. Binds to stalled ribosomes, contacting rRNA.

Endonuclease that is involved in the suppression of homologous recombination and thus may have a key role in the control of bacterial genetic diversity. Functionally, acts as a ribosome collision sensor, splitting the ribosome into its 2 subunits. Detects stalled/collided 70S ribosomes which it binds and splits by an ATP-hydrolysis driven conformational change. Acts upstream of the ribosome quality control system (RQC), a ribosome-associated complex that mediates the extraction of incompletely synthesized nascent chains from stalled ribosomes and their subsequent degradation. Probably generates substrates for RQC. This is Endonuclease MutS2 from Streptococcus pneumoniae (strain JJA).